The following is a 395-amino-acid chain: Zinc finger protein HD1 (395 aa).

A B box-type 1; atypical zinc finger spans residues 30-72 (PWARPCDGCRAAPSVVYCRADAAYLCASCDARVHAANRVASRH). Zn(2+)-binding residues include Cys35, Cys38, Cys58, His63, Cys78, Cys81, Cys101, and His106. The segment at 73-117 (ERVRVCEACERAPAALACRADAAALCVACDVQVHSANPLPAITIP) adopts a B box-type 2; atypical zinc-finger fold. Disordered regions lie at residues 147–176 (SKDS…SNNG) and 208–228 (GMHE…EFAE). Residues 152–175 (NNNNNNNNNDNDNNDNNNSNSSNN) are compositionally biased toward low complexity. A CCT domain is found at 326–368 (REARVLRYREKKKARKFEKTIRYETRKAYAEARPRIKGRFAKR).

This sequence belongs to the CONSTANS family. In terms of assembly, interacts with HAL3 in the dark. In terms of processing, phosphorylated by OSK4 in the presence of HDR1.

Its subcellular location is the nucleus. Probable transcription factor involved in the regulation of flower development. Required for the promotion of flowering under short day (SD) conditions and the suppression of flowering under long day (LD) conditions. Positively regulates the floral activator HEADING DATE 3a (HD3A) under SD and negatively under LD conditions. This Oryza sativa subsp. japonica (Rice) protein is Zinc finger protein HD1.